The following is a 290-amino-acid chain: Nucleotide-binding protein XF_1405 (290 aa).

13–20 (GLSGSGKS) provides a ligand contact to ATP. Position 65 to 68 (65 to 68 (DIRS)) interacts with GTP.

It belongs to the RapZ-like family.

Functionally, displays ATPase and GTPase activities. This Xylella fastidiosa (strain 9a5c) protein is Nucleotide-binding protein XF_1405.